A 141-amino-acid chain; its full sequence is Small ribosomal subunit protein uS19 (141 aa).

Belongs to the universal ribosomal protein uS19 family.

Its function is as follows. Protein S19 forms a complex with S13 that binds strongly to the 16S ribosomal RNA. This Halorubrum lacusprofundi (strain ATCC 49239 / DSM 5036 / JCM 8891 / ACAM 34) protein is Small ribosomal subunit protein uS19.